The chain runs to 177 residues: Large ribosomal subunit protein uL6 (177 aa).

The protein belongs to the universal ribosomal protein uL6 family. In terms of assembly, part of the 50S ribosomal subunit.

Functionally, this protein binds to the 23S rRNA, and is important in its secondary structure. It is located near the subunit interface in the base of the L7/L12 stalk, and near the tRNA binding site of the peptidyltransferase center. In Methanothermobacter thermautotrophicus (strain ATCC 29096 / DSM 1053 / JCM 10044 / NBRC 100330 / Delta H) (Methanobacterium thermoautotrophicum), this protein is Large ribosomal subunit protein uL6.